The primary structure comprises 205 residues: Metalloproteinase inhibitor 1 (205 aa).

The N-terminal stretch at 1-24 (MMAPFASLASGILLLLSLIASSKA) is a signal peptide. Cys25 serves as a coordination point for Zn(2+). The tract at residues 25 to 28 (CSCA) is involved in metalloproteinase-binding. Disulfide bonds link Cys25-Cys94, Cys27-Cys123, Cys37-Cys148, Cys151-Cys197, Cys156-Cys161, and Cys169-Cys189. An NTR domain is found at 25 to 148 (CSCAPPHPQT…AFSKTYSAGC (124 aa)). Residue Asn54 is glycosylated (N-linked (GlcNAc...) asparagine). The involved in metalloproteinase-binding stretch occupies residues 91 to 92 (ES). Asn102 carries N-linked (GlcNAc...) asparagine glycosylation. The residue at position 179 (Ser179) is a Phosphoserine.

This sequence belongs to the protease inhibitor I35 (TIMP) family. Interacts with MMP1, MMP3, MMP10 and MMP13, but has only very low affinity for MMP14. Interacts with CD63; identified in a complex with CD63 and ITGB1. Post-translationally, the activity of TIMP1 is dependent on the presence of disulfide bonds. N-glycosylated. Found in fetal and adult tissues. Highest levels are found in bone. Also found in lung, ovary and uterus.

It is found in the secreted. Metalloproteinase inhibitor that functions by forming one to one complexes with target metalloproteinases, such as collagenases, and irreversibly inactivates them by binding to their catalytic zinc cofactor. Acts on MMP1, MMP2, MMP3, MMP7, MMP8, MMP9, MMP10, MMP11, MMP12, MMP13 and MMP16. Does not act on MMP14. Also functions as a growth factor that regulates cell differentiation, migration and cell death and activates cellular signaling cascades via CD63 and ITGB1. Plays a role in integrin signaling. In Mus musculus (Mouse), this protein is Metalloproteinase inhibitor 1 (Timp1).